We begin with the raw amino-acid sequence, 120 residues long: MSERSARQWPDFLSVVLLALLLWISLFCGWRALMFCCASVFSVALCVAADCLDALIMSCRVPEHFARFVWPLTWLGSLSGLGLAVMATSQLKTGPEHVIWALAGLLTFWLSFRFRARLFG.

The next 4 membrane-spanning stretches (helical) occupy residues 9–29, 32–52, 68–88, and 94–114; these read WPDF…LFCG, ALMF…ADCL, FVWP…VMAT, and GPEH…SFRF.

It localises to the membrane. This is an uncharacterized protein from Escherichia phage Mu (Bacteriophage Mu).